We begin with the raw amino-acid sequence, 179 residues long: Large ribosomal subunit protein uL5c (179 aa).

It belongs to the universal ribosomal protein uL5 family. Part of the 50S ribosomal subunit; contacts the 5S rRNA.

The protein localises to the plastid. Its subcellular location is the chloroplast. In terms of biological role, binds 5S rRNA, forms part of the central protuberance of the 50S subunit. The chain is Large ribosomal subunit protein uL5c (rpl5) from Euglena gracilis.